Here is a 335-residue protein sequence, read N- to C-terminus: MAEREQSNDSARTDVPAIVSLRTRELDTGEGRMQWASTLERLYCETDVAWPEPRRHFDAEWGGRPFGDLHVSTIRADAHTVVRSPAMIQSDSGEGYLVCLVTDGSVEVRQSGRATVVEPGSFALLDCAAPFVFHSPAPFRQVVVRSPREVLTSRLPGRIVEHGTARSIHGDTGAGGLVGRLFVDIADMDAPMSQGAAVSFASSAVDMLATALTEGLLATSAADLHRTEDLTRVQRVIEQNLHDADITLSDIAAAAGMSLRTVHKLFNAEGTTTRAWLYQARLEAARRYLLTTDLSVADVSECAGFRDVSHFSRLFRSTFGSSPGLYRKEHARIGS.

Residues 231-329 (TRVQRVIEQN…GSSPGLYRKE (99 aa)) enclose the HTH araC/xylS-type domain. DNA-binding regions (H-T-H motif) lie at residues 249–270 (SDIAAAAGMSLRTVHKLFNAEG) and 296–319 (VADVSECAGFRDVSHFSRLFRSTF).

Functionally, transcriptional activator of nphA1 and nphA2 involved in the degradation of 4-nitrophenol (4-NP). The protein is Transcriptional activator NphR (nphR) of Rhodococcus sp.